We begin with the raw amino-acid sequence, 123 residues long: Large ribosomal subunit protein bL12 (123 aa).

Belongs to the bacterial ribosomal protein bL12 family. In terms of assembly, homodimer. Part of the ribosomal stalk of the 50S ribosomal subunit. Forms a multimeric L10(L12)X complex, where L10 forms an elongated spine to which 2 to 4 L12 dimers bind in a sequential fashion. Binds GTP-bound translation factors.

Functionally, forms part of the ribosomal stalk which helps the ribosome interact with GTP-bound translation factors. Is thus essential for accurate translation. The chain is Large ribosomal subunit protein bL12 from Rhodopseudomonas palustris (strain BisB5).